The sequence spans 861 residues: 1,4-alpha-glucan-branching enzyme (861 aa).

Residues W173 and K208 each contribute to the (1,4-alpha-D-glucosyl)n site. The Nucleophile role is filled by D429. The active-site Proton donor is E484.

It belongs to the glycosyl hydrolase 13 family. GlgB subfamily. As to quaternary structure, monomer.

The protein resides in the plastid. Its subcellular location is the chloroplast. It is found in the amyloplast. It carries out the reaction Transfers a segment of a (1-&gt;4)-alpha-D-glucan chain to a primary hydroxy group in a similar glucan chain.. Its pathway is glycan biosynthesis; starch biosynthesis. Catalyzes the formation of the alpha-1,6-glucosidic linkages in starch by scission of a 1,4-alpha-linked oligosaccharide from growing alpha-1,4-glucan chains and the subsequent attachment of the oligosaccharide to the alpha-1,6 position. In Solanum tuberosum (Potato), this protein is 1,4-alpha-glucan-branching enzyme (SBE1).